The chain runs to 116 residues: Beta-D-galactosidase Rv1717 (116 aa).

Positions 40–107 (LSVYRPGGTA…TDRQALLLVT (68 aa)) constitute a Cupin type-2 domain.

The protein localises to the secreted. Its subcellular location is the cell wall. The catalysed reaction is Hydrolysis of terminal non-reducing beta-D-galactose residues in beta-D-galactosides.. With respect to regulation, beta-galactosidase activity is activated by Mg(2+) and significantly inhibited by Ca(2+), Cd(2+), Fe(2+), Ni(2+), Cu(2+) and Zn(2+). Inhibited by EDTA. Functionally, beta-D-galactopyranosidase that specifically recognizes the beta-glycosidic bonds formed with beta-D-galactopyranose (beta-D-Gal) or N-acetylgalactosamine (beta-D-GalNAc). May target the galactoside linkages in the exopolysaccharide component of the mycobacterial extracellular polymeric substance (EPS) and help dispersal of Mtb bacteria from a deteriorating biofilm. The polypeptide is Beta-D-galactosidase Rv1717 (Mycobacterium tuberculosis (strain ATCC 25618 / H37Rv)).